The following is a 254-amino-acid chain: 3-deoxy-manno-octulosonate cytidylyltransferase (254 aa).

It belongs to the KdsB family.

Its subcellular location is the cytoplasm. The catalysed reaction is 3-deoxy-alpha-D-manno-oct-2-ulosonate + CTP = CMP-3-deoxy-beta-D-manno-octulosonate + diphosphate. Its pathway is nucleotide-sugar biosynthesis; CMP-3-deoxy-D-manno-octulosonate biosynthesis; CMP-3-deoxy-D-manno-octulosonate from 3-deoxy-D-manno-octulosonate and CTP: step 1/1. It functions in the pathway bacterial outer membrane biogenesis; lipopolysaccharide biosynthesis. Its function is as follows. Activates KDO (a required 8-carbon sugar) for incorporation into bacterial lipopolysaccharide in Gram-negative bacteria. The sequence is that of 3-deoxy-manno-octulosonate cytidylyltransferase from Pseudomonas entomophila (strain L48).